A 183-amino-acid chain; its full sequence is ATP-dependent protease subunit HslV (183 aa).

T9 is an active-site residue. 3 residues coordinate Na(+): A164, C167, and T170.

It belongs to the peptidase T1B family. HslV subfamily. A double ring-shaped homohexamer of HslV is capped on each side by a ring-shaped HslU homohexamer. The assembly of the HslU/HslV complex is dependent on binding of ATP.

It is found in the cytoplasm. It carries out the reaction ATP-dependent cleavage of peptide bonds with broad specificity.. With respect to regulation, allosterically activated by HslU binding. Protease subunit of a proteasome-like degradation complex believed to be a general protein degrading machinery. The sequence is that of ATP-dependent protease subunit HslV from Hydrogenovibrio crunogenus (strain DSM 25203 / XCL-2) (Thiomicrospira crunogena).